A 101-amino-acid chain; its full sequence is Small ribosomal subunit protein uS14 (101 aa).

The protein belongs to the universal ribosomal protein uS14 family. In terms of assembly, part of the 30S ribosomal subunit. Contacts proteins S3 and S10.

Functionally, binds 16S rRNA, required for the assembly of 30S particles and may also be responsible for determining the conformation of the 16S rRNA at the A site. The protein is Small ribosomal subunit protein uS14 of Synechococcus sp. (strain JA-2-3B'a(2-13)) (Cyanobacteria bacterium Yellowstone B-Prime).